Here is a 312-residue protein sequence, read N- to C-terminus: ADIPOR-like receptor IZH4 (312 aa).

Residues 1–38 (MVSLTTIEQSPVKCETTTEKESNDTRGTDSNENAETKE) are disordered. Over 1–64 (MVSLTTIEQS…YKNKSSRNES (64 aa)) the chain is Cytoplasmic. The segment covering 16-38 (TTTEKESNDTRGTDSNENAETKE) has biased composition (basic and acidic residues). The helical transmembrane segment at 65 to 85 (LVALIYLLGSMLSFCLLIFFT) threads the bilayer. Residues 86 to 101 (DFYLIPLFPTTTTMTD) lie on the Lumenal side of the membrane. A helical transmembrane segment spans residues 102–122 (YIVFNFYLLNVFVFCMVHFIY). Residues 123 to 141 (HFVKNISLQQHLEHWQKFS) are Cytoplasmic-facing. A helical membrane pass occupies residues 142–162 (YLSNINLLISSQITILYYLFY). Topologically, residues 163-165 (DYV) are lumenal. The helical transmembrane segment at 166–186 (FFFKIFTLLMNFIGLVAYFFI) threads the bilayer. At 187–201 (LTDKLISSKRFNKTV) the chain is on the cytoplasmic side. Residues 202-222 (FFISVSVVCCSLPLLTAIITF) traverse the membrane as a helical segment. Over 223-231 (DGLENLKER) the chain is Lumenal. The chain crosses the membrane as a helical span at residues 232–252 (IKVNAITWELVALVAASIIYV). The Cytoplasmic segment spans residues 253–277 (TRFPESLFRRNKKEEGWNHSEYLFH). Residues 278-298 (LLISGTAFYHFFILIQSYILM) traverse the membrane as a helical segment. Topologically, residues 299–312 (HSSLNQPELINFKS) are lumenal.

The protein belongs to the ADIPOR family.

It is found in the endoplasmic reticulum membrane. ADIPOR-like receptor involved in zinc metabolism either by altering membrane sterol content or by directly altering cellular zinc levels. In Saccharomyces cerevisiae (strain ATCC 204508 / S288c) (Baker's yeast), this protein is ADIPOR-like receptor IZH4 (IZH4).